We begin with the raw amino-acid sequence, 612 residues long: Elongation factor 4 (612 aa).

One can recognise a tr-type G domain in the interval 12–194 (SRIRNFSIIA…QIVEKVPAPS (183 aa)). Residues 24 to 29 (DHGKST) and 141 to 144 (NKID) each bind GTP.

The protein belongs to the TRAFAC class translation factor GTPase superfamily. Classic translation factor GTPase family. LepA subfamily.

It localises to the cell membrane. It catalyses the reaction GTP + H2O = GDP + phosphate + H(+). Functionally, required for accurate and efficient protein synthesis under certain stress conditions. May act as a fidelity factor of the translation reaction, by catalyzing a one-codon backward translocation of tRNAs on improperly translocated ribosomes. Back-translocation proceeds from a post-translocation (POST) complex to a pre-translocation (PRE) complex, thus giving elongation factor G a second chance to translocate the tRNAs correctly. Binds to ribosomes in a GTP-dependent manner. The sequence is that of Elongation factor 4 from Bacillus licheniformis (strain ATCC 14580 / DSM 13 / JCM 2505 / CCUG 7422 / NBRC 12200 / NCIMB 9375 / NCTC 10341 / NRRL NRS-1264 / Gibson 46).